The primary structure comprises 82 residues: Defensin-like protein 208 (82 aa).

The N-terminal stretch at 1–29 is a signal peptide; it reads MAKNLNTVSFTVLLLVLLMASTGILETEA. Disulfide bonds link Cys38–Cys63, Cys50–Cys76, and Cys54–Cys78.

It belongs to the DEFL family.

The protein resides in the secreted. The protein is Defensin-like protein 208 of Arabidopsis thaliana (Mouse-ear cress).